A 342-amino-acid polypeptide reads, in one-letter code: Forkhead box protein D5-C (342 aa).

Residues 1-89 (MNLSQDSSAH…KHSLDTTTNG (89 aa)) form a disordered region. A compositionally biased stretch (acidic residues) spans 20–34 (SDDEDEIDILGEDDP). Residues 59–70 (SKLSCNESASHS) are compositionally biased toward polar residues. Residues 71-83 (SGERERGTSKHSL) show a composition bias toward basic and acidic residues. The segment at residues 97–191 (KPPYSYIALI…DNGSFLRRRK (95 aa)) is a DNA-binding region (fork-head).

At the onset of gastrulation, expressed in the superficial layer of cells in the dorsal blastopore lip (Spemann organizer). In the open neural plate, expressed in a row of cells destined to become the floor plate of the neural tube. After neural tube closure, only detected in the tailtip and a small area located at the midbrain/hindbrain boundary.

It localises to the nucleus. Transcriptional repressor. The protein is Forkhead box protein D5-C (foxd5-c) of Xenopus laevis (African clawed frog).